We begin with the raw amino-acid sequence, 142 residues long: Large ribosomal subunit protein uL13 (142 aa).

The protein belongs to the universal ribosomal protein uL13 family. Part of the 50S ribosomal subunit.

In terms of biological role, this protein is one of the early assembly proteins of the 50S ribosomal subunit, although it is not seen to bind rRNA by itself. It is important during the early stages of 50S assembly. This Paraburkholderia phytofirmans (strain DSM 17436 / LMG 22146 / PsJN) (Burkholderia phytofirmans) protein is Large ribosomal subunit protein uL13.